Here is a 245-residue protein sequence, read N- to C-terminus: tRNA pseudouridine synthase A (245 aa).

Residue Asp52 is the Nucleophile of the active site. Tyr110 contributes to the substrate binding site.

The protein belongs to the tRNA pseudouridine synthase TruA family. Homodimer.

The enzyme catalyses uridine(38/39/40) in tRNA = pseudouridine(38/39/40) in tRNA. Functionally, formation of pseudouridine at positions 38, 39 and 40 in the anticodon stem and loop of transfer RNAs. This Borrelia hermsii (strain HS1 / DAH) protein is tRNA pseudouridine synthase A.